The following is a 430-amino-acid chain: Serine--tRNA ligase (430 aa).

Residue 237-239 coordinates L-serine; the sequence is TAE. 268-270 lines the ATP pocket; sequence RAE. Glutamate 291 serves as a coordination point for L-serine. Residue 355–358 participates in ATP binding; sequence EVSS. Serine 391 lines the L-serine pocket.

Belongs to the class-II aminoacyl-tRNA synthetase family. Type-1 seryl-tRNA synthetase subfamily. In terms of assembly, homodimer. The tRNA molecule binds across the dimer.

The protein localises to the cytoplasm. It catalyses the reaction tRNA(Ser) + L-serine + ATP = L-seryl-tRNA(Ser) + AMP + diphosphate + H(+). The enzyme catalyses tRNA(Sec) + L-serine + ATP = L-seryl-tRNA(Sec) + AMP + diphosphate + H(+). The protein operates within aminoacyl-tRNA biosynthesis; selenocysteinyl-tRNA(Sec) biosynthesis; L-seryl-tRNA(Sec) from L-serine and tRNA(Sec): step 1/1. Its function is as follows. Catalyzes the attachment of serine to tRNA(Ser). Is also able to aminoacylate tRNA(Sec) with serine, to form the misacylated tRNA L-seryl-tRNA(Sec), which will be further converted into selenocysteinyl-tRNA(Sec). The sequence is that of Serine--tRNA ligase from Baumannia cicadellinicola subsp. Homalodisca coagulata.